Here is a 351-residue protein sequence, read N- to C-terminus: Protein RecA (351 aa).

67 to 74 (GPESSGKT) contacts ATP.

It belongs to the RecA family.

Its subcellular location is the cytoplasm. In terms of biological role, can catalyze the hydrolysis of ATP in the presence of single-stranded DNA, the ATP-dependent uptake of single-stranded DNA by duplex DNA, and the ATP-dependent hybridization of homologous single-stranded DNAs. It interacts with LexA causing its activation and leading to its autocatalytic cleavage. The chain is Protein RecA from Mannheimia succiniciproducens (strain KCTC 0769BP / MBEL55E).